The following is a 687-amino-acid chain: DnaJ protein ERDJ2A (687 aa).

Topologically, residues 1–8 are lumenal; that stretch reads MAASEENS. A helical transmembrane segment spans residues 9 to 29; the sequence is ALFPIFILTIMAIPLVPYTMV. At 30–65 the chain is on the cytoplasmic side; the sequence is KLSGALSKKQRTIHCQCLECDRSGKYKRSLFKKISN. The chain crosses the membrane as a helical span at residues 66-86; the sequence is FSTWSNLTLVLLWVVMIFLIY. Residues 87 to 190 are Lumenal-facing; that stretch reads YTKNMSREAQ…FLLDIDGASG (104 aa). The N-linked (GlcNAc...) asparagine glycan is linked to Asn-90. The J domain maps to 99–164; that stretch reads DPFSILGLEP…VSRENFEKYG (66 aa). A helical membrane pass occupies residues 191-211; sequence GILLLWIVGVCILLPLVIAVI. The SEC63 domain maps to 205–603; the sequence is PLVIAVIYLS…IGCDKKQALK (399 aa). The Cytoplasmic segment spans residues 212 to 687; it reads YLSRSSKYTG…SSEESGSEEE (476 aa). The interval 619-687 is disordered; sequence SDEGAIAEEG…SSEESGSEEE (69 aa). The segment covering 623 to 654 has biased composition (acidic residues); sequence AIAEEGMEEEDEIEEEDYDDDYESEYSEDEDE.

As to quaternary structure, interacts with OEP61/TPR7. Expressed in leaves, flower buds and flowers.

The protein resides in the endoplasmic reticulum membrane. Functionally, required for integral membrane and secreted preprotein translocation across the endoplasmic reticulum membrane. This is DnaJ protein ERDJ2A (ERDJ2A) from Arabidopsis thaliana (Mouse-ear cress).